A 149-amino-acid polypeptide reads, in one-letter code: Detocs response regulatory protein DtcB (149 aa).

The Response regulatory domain maps to Met-1–Asn-134. A 4-aspartylphosphate modification is found at Asp-53.

Probably phosphorylated by DtcA.

Functionally, possible phosphate scavenger member of the two-component regulatory system Detocs that confers resistance to bacteriophage. When the system (DtcA-DtcB-DtcC) is expressed in a susceptible E.coli (strain MG1655) it confers resistance to bacteriophages T2, T4, T5, T6 and SECphi27. Detocs inhibits T5 infection leading to growth arrest but not complete cell lysis, during SECphi27 infection leads to cell lysis. Overexpression of this protein along with the intact Detocs locus cancels T5 immunity; when the phosphate-receiving Asp-53 is mutated to Ala in this protein, immunity is restored. DtcA probably autophosphorylates upon sensing viral infection, and subsequently transfers the phosphate signal to DtcC which activates it, leading to an antiviral defense; DtcB (this subunit) may scavenge phosphorylation signals from accidental activation of DtcA. The polypeptide is Detocs response regulatory protein DtcB (Vibrio alginolyticus).